Consider the following 473-residue polypeptide: Tubulin gamma chain (473 aa).

Residues 33–56 are disordered; it reads TDGLSQLPDSSTERDDDTKPFFRE. Positions 43-56 are enriched in basic and acidic residues; it reads STERDDDTKPFFRE. 143 to 149 lines the GTP pocket; that stretch reads AGGTGSG.

It belongs to the tubulin family. Interacts with SPC72, SPC97 and SPC98.

It localises to the cytoplasm. The protein localises to the cytoskeleton. Its subcellular location is the microtubule organizing center. It is found in the spindle pole body. In terms of biological role, tubulin is the major constituent of microtubules. The gamma chain is found at microtubule organizing centers (MTOC) such as the spindle poles or the centrosome, suggesting that it is involved in the minus-end nucleation of microtubule assembly. TUB4 is an important spindle pole body component that organizes both cytoplasmic and nuclear microtubule arrays. The polypeptide is Tubulin gamma chain (TUB4) (Saccharomyces cerevisiae (strain ATCC 204508 / S288c) (Baker's yeast)).